The sequence spans 293 residues: uncharacterized protein (293 aa).

Disordered stretches follow at residues 1 to 95 and 268 to 293; these read MFLR…KDKA and EETA…GRAL. 3 positions are modified to phosphoserine: S34, S35, and S89. Basic and acidic residues-rich tracts occupy residues 85–95 and 277–286; these read KRMDSLKKDKA and GQGKEAKEQT.

This is an uncharacterized protein from Rattus norvegicus (Rat).